The following is a 645-amino-acid chain: Chlorophyllide a oxygenase, chloroplastic (645 aa).

Residues 1 to 46 (MLPASLQRKAAAVGGRGPTNQSRVAVRVSAQPKEAPPASTPIVEDP) are disordered. A coiled-coil region spans residues 105–218 (QARQKLEYLR…RKASDLDIKE (114 aa)). The interval 258–287 (ATTVTQEVPSTSYGTPVDRAPRRSKAAIRR) is disordered. The span at 259–271 (TTVTQEVPSTSYG) shows a compositional bias: polar residues. Residues 305 to 406 (WYPAEFSARL…CAEKDGFIWV (102 aa)) form the Rieske domain. [2Fe-2S] cluster contacts are provided by cysteine 346, histidine 348, cysteine 365, and histidine 368. Fe cation-binding residues include glutamate 446, aspartate 450, histidine 453, and histidine 458.

It is found in the plastid. The protein localises to the chloroplast inner membrane. The protein resides in the chloroplast thylakoid membrane. The catalysed reaction is chlorophyllide a + 2 NADPH + 2 O2 + 2 H(+) = chlorophyllide b + 2 NADP(+) + 3 H2O. Catalyzes a two-step oxygenase reaction involved in the synthesis of chlorophyll b. Acts specifically on the non-esterified chlorophyllide a and not on chlorophyll a. The sequence is that of Chlorophyllide a oxygenase, chloroplastic (CAO) from Chlamydomonas reinhardtii (Chlamydomonas smithii).